We begin with the raw amino-acid sequence, 100 residues long: MELNPTEKDKLLIFTAGLVAERRKARGLKLNYPEAVAFISAALLEGARDGMTVSELMHFGTTLLKREDVMDGVPEMIAEVQVEATFPDGSKLVTVHQPIV.

This sequence belongs to the urease gamma subunit family. As to quaternary structure, heterotrimer of UreA (gamma), UreB (beta) and UreC (alpha) subunits. Three heterotrimers associate to form the active enzyme.

The protein localises to the cytoplasm. The catalysed reaction is urea + 2 H2O + H(+) = hydrogencarbonate + 2 NH4(+). Its pathway is nitrogen metabolism; urea degradation; CO(2) and NH(3) from urea (urease route): step 1/1. This is Urease subunit gamma from Acinetobacter baumannii (strain AB307-0294).